The primary structure comprises 331 residues: DSC E3 ubiquitin ligase complex subunit D (331 aa).

An N-linked (GlcNAc...) asparagine glycan is attached at asparagine 26. The next 3 helical transmembrane spans lie at 63 to 83, 107 to 127, and 159 to 179; these read ILIY…ILFA, PFIG…NFFT, and LFLL…LIVE. The segment covering 197 to 214 has biased composition (basic and acidic residues); that stretch reads VQDHDSEERGVHRTRPES. Residues 197–225 form a disordered region; the sequence is VQDHDSEERGVHRTRPESRSSVVGAELDE.

Component of the DSC E3 ubiquitin ligase complex composed of dscA, dscB, dscC and dscD.

The protein resides in the endoplasmic reticulum membrane. The protein operates within protein modification; protein ubiquitination. Functionally, component of the DSC E3 ubiquitin ligase complex which is required for the srbA transcriptional activator proteolytic cleavage to release the soluble transcription factor from the membrane in low oxygen or sterol conditions. Required for growth during hypoxia and triazole drug susceptibility, as well as for virulence in a murine model of invasive pulmonary aspergillosis (IPA). The protein is DSC E3 ubiquitin ligase complex subunit D of Aspergillus fumigatus (strain CBS 144.89 / FGSC A1163 / CEA10) (Neosartorya fumigata).